The chain runs to 244 residues: 7-cyano-7-deazaguanine synthase (244 aa).

Residue 19–29 participates in ATP binding; the sequence is FSGGQDSTTCL. Zn(2+) is bound by residues Cys-207, Cys-222, Cys-225, and Cys-228.

It belongs to the QueC family. Zn(2+) serves as cofactor.

The catalysed reaction is 7-carboxy-7-deazaguanine + NH4(+) + ATP = 7-cyano-7-deazaguanine + ADP + phosphate + H2O + H(+). It participates in purine metabolism; 7-cyano-7-deazaguanine biosynthesis. Functionally, catalyzes the ATP-dependent conversion of 7-carboxy-7-deazaguanine (CDG) to 7-cyano-7-deazaguanine (preQ(0)). This is 7-cyano-7-deazaguanine synthase from Bordetella avium (strain 197N).